Reading from the N-terminus, the 289-residue chain is Oxaloacetate decarboxylase (289 aa).

Ser-50 contributes to the substrate binding site. Asp-88 contributes to the Mg(2+) binding site. Positions 159 and 235 each coordinate substrate.

This sequence belongs to the isocitrate lyase/PEP mutase superfamily. Oxaloacetate decarboxylase family. Homotetramer; dimer of dimers. Requires Mg(2+) as cofactor.

The enzyme catalyses oxaloacetate + H(+) = pyruvate + CO2. Functionally, catalyzes the decarboxylation of oxaloacetate into pyruvate. Seems to play a role in maintaining cellular concentrations of bicarbonate and pyruvate. The chain is Oxaloacetate decarboxylase from Pseudomonas fluorescens (strain ATCC BAA-477 / NRRL B-23932 / Pf-5).